A 91-amino-acid polypeptide reads, in one-letter code: Small ribosomal subunit protein uS19 (91 aa).

Belongs to the universal ribosomal protein uS19 family.

In terms of biological role, protein S19 forms a complex with S13 that binds strongly to the 16S ribosomal RNA. The chain is Small ribosomal subunit protein uS19 from Fusobacterium nucleatum subsp. nucleatum (strain ATCC 25586 / DSM 15643 / BCRC 10681 / CIP 101130 / JCM 8532 / KCTC 2640 / LMG 13131 / VPI 4355).